Consider the following 260-residue polypeptide: Pectate lyase H (260 aa).

A signal peptide spans 1 to 17 (MFIKNGLLLSLATSVLA).

The protein belongs to the polysaccharide lyase 3 family. It depends on Ca(2+) as a cofactor.

It localises to the secreted. The catalysed reaction is Eliminative cleavage of (1-&gt;4)-alpha-D-galacturonan to give oligosaccharides with 4-deoxy-alpha-D-galact-4-enuronosyl groups at their non-reducing ends.. Its function is as follows. Pectinolytic enzyme consist of four classes of enzymes: pectin lyase, polygalacturonase, pectin methylesterase and rhamnogalacturonase. Among pectinolytic enzymes, pectin lyase is the most important in depolymerization of pectin, since it cleaves internal glycosidic bonds of highly methylated pectins. Favors pectate, the anion, over pectin, the methyl ester. The polypeptide is Pectate lyase H (plyH) (Emericella nidulans (strain FGSC A4 / ATCC 38163 / CBS 112.46 / NRRL 194 / M139) (Aspergillus nidulans)).